The primary structure comprises 85 residues: MGLKLDLTWFDKSTEDFKGEEYSKDFGDDGSVMESLGVPFKDNVNNGCFDVIAEWVPLLQPYFNHQIDISDNEYFVSFDYRDGDW.

This sequence belongs to the cloacin immunity protein family. In terms of assembly, native colicin E3 is a 1:1 complex of A chain and protein B (Im3). Binds between the translocation and cytotoxic RNase domains of intact ColE3, blocking access to the 16S rRNA substrate. Forms a very tight 1:1 complex with the cytotoxic fragment (residues 456-551) of ColE3 (ceaC).

Its function is as follows. The cognate immunity protein for colicin E3 (ColE3), protects cells which harbor the plasmid ColE3 against the toxic action of ColE3. This protein inhibits the 16S RNA hydrolyzing activity of ColE3 by binding with very high affinity to the C-terminal catalytic domain of ColE3. In Escherichia coli, this protein is Colicin E3 immunity protein.